The chain runs to 155 residues: Phospholipase A2 A2-actitoxin-Ucs2a (155 aa).

The first 19 residues, 1–19, serve as a signal peptide directing secretion; it reads MKNNIILVILLGISVFVDC. The propeptide occupies 20-42; it reads LPLNDQEEDKSLNAQESEVSAVQ. Intrachain disulfides connect cysteine 55–cysteine 118, cysteine 71–cysteine 87, cysteine 86–cysteine 143, cysteine 93–cysteine 136, cysteine 100–cysteine 129, and cysteine 122–cysteine 134. Ca(2+) is bound by residues glycine 72 and glycine 74. The active site involves histidine 90. Ca(2+) is bound at residue aspartate 91. Residue aspartate 137 is part of the active site.

The protein belongs to the phospholipase A2 family. The cofactor is Ca(2+).

The protein resides in the secreted. It localises to the nematocyst. It carries out the reaction a 1,2-diacyl-sn-glycero-3-phosphocholine + H2O = a 1-acyl-sn-glycero-3-phosphocholine + a fatty acid + H(+). In terms of biological role, PLA2 catalyzes the calcium-dependent hydrolysis of the 2-acyl groups in 3-sn-phosphoglycerides. This chain is Phospholipase A2 A2-actitoxin-Ucs2a, found in Urticina crassicornis (Mottled anemone).